Here is a 104-residue protein sequence, read N- to C-terminus: Ig lambda-2 chain C region (104 aa).

The Ig-like domain occupies 6 to 99 (PTLTVFPPSS…EGDTVEKSLS (94 aa)). A disulfide bond links Cys27 and Cys85.

The chain is Ig lambda-2 chain C region (Iglc2) from Mus musculus (Mouse).